The sequence spans 330 residues: Ribosomal RNA small subunit methyltransferase H (330 aa).

S-adenosyl-L-methionine-binding positions include 50 to 52, D69, L103, D117, and Q124; that span reads GGH.

The protein belongs to the methyltransferase superfamily. RsmH family.

It is found in the cytoplasm. The catalysed reaction is cytidine(1402) in 16S rRNA + S-adenosyl-L-methionine = N(4)-methylcytidine(1402) in 16S rRNA + S-adenosyl-L-homocysteine + H(+). Specifically methylates the N4 position of cytidine in position 1402 (C1402) of 16S rRNA. This chain is Ribosomal RNA small subunit methyltransferase H, found in Saccharopolyspora erythraea (strain ATCC 11635 / DSM 40517 / JCM 4748 / NBRC 13426 / NCIMB 8594 / NRRL 2338).